The sequence spans 615 residues: DNA mismatch repair protein MutL (615 aa).

The interval 363-397 (FAEPAAREPVAPRYTPAPASGSRPAAPWPNAQPGY) is disordered. Positions 364 to 391 (AEPAAREPVAPRYTPAPASGSRPAAPWP) are enriched in low complexity.

The protein belongs to the DNA mismatch repair MutL/HexB family.

Its function is as follows. This protein is involved in the repair of mismatches in DNA. It is required for dam-dependent methyl-directed DNA mismatch repair. May act as a 'molecular matchmaker', a protein that promotes the formation of a stable complex between two or more DNA-binding proteins in an ATP-dependent manner without itself being part of a final effector complex. In Escherichia coli (strain ATCC 8739 / DSM 1576 / NBRC 3972 / NCIMB 8545 / WDCM 00012 / Crooks), this protein is DNA mismatch repair protein MutL.